The primary structure comprises 109 residues: Flowering-promoting factor 1-like protein 1 (109 aa).

The D-box signature appears at 73–81 (RGSLDLISL).

Belongs to the FPF1 family. As to quaternary structure, interacts with RPT4. Post-translationally, ubiquitinated. RPT4 mediates its proteasome-dependent degradation. As to expression, specifically expressed in the apical meristem, the elongation zone of root tip, steles of the branch zone, and the young lateral root. Also expressed in spikes. Expressed in roots and spikes (at protein level).

The protein localises to the cytoplasm. Its subcellular location is the nucleus. GTP-binding protein that functions in the development of root systems, which are mediated by auxin. Acts as a cell cycle regulator during root development. Proteasome-mediated degradation of the protein is necessary for the transition of metaphase to anaphase in mitosis. In Oryza sativa subsp. japonica (Rice), this protein is Flowering-promoting factor 1-like protein 1 (RAA1).